Here is a 121-residue protein sequence, read N- to C-terminus: C-type natriuretic peptide 4 (121 aa).

Positions 1-22 (MNLSYLVACGLLVTFLSDKMDA) are cleaved as a signal peptide. A propeptide spanning residues 23-96 (QPLTPAQQKS…SRRHKSGSKK (74 aa)) is cleaved from the precursor. The segment at 80 to 109 (LLNDQPASRRHKSGSKKGGSTSRSGCFGHK) is disordered. Cys105 and Cys121 are oxidised to a cystine.

This sequence belongs to the natriuretic peptide family. As to expression, brain, spinal cord, spleen, heart and fin, and to a lower extent in gill and ovary.

It localises to the secreted. In terms of biological role, exhibits natriuretic and vasodepressant activity. Has cGMP-stimulating activity. May help to regulate body fluid homeostasis in a variety of aquatic environments. This chain is C-type natriuretic peptide 4, found in Oryzias latipes (Japanese rice fish).